A 560-amino-acid chain; its full sequence is DNA ligase B (560 aa).

The N6-AMP-lysine intermediate role is filled by Lys-124.

It belongs to the NAD-dependent DNA ligase family. LigB subfamily.

It catalyses the reaction NAD(+) + (deoxyribonucleotide)n-3'-hydroxyl + 5'-phospho-(deoxyribonucleotide)m = (deoxyribonucleotide)n+m + AMP + beta-nicotinamide D-nucleotide.. Its function is as follows. Catalyzes the formation of phosphodiester linkages between 5'-phosphoryl and 3'-hydroxyl groups in double-stranded DNA using NAD as a coenzyme and as the energy source for the reaction. This Escherichia coli O9:H4 (strain HS) protein is DNA ligase B.